Consider the following 480-residue polypeptide: G-rich sequence factor 1 (480 aa).

Residues 1 to 117 (MAGTRWVLGA…AAAAVPTRSY (117 aa)) constitute a mitochondrion transit peptide. RRM domains follow at residues 122 to 246 (KTTY…SSPV) and 250 to 326 (GVVR…PSRR). Serine 244 carries the phosphoserine modification. Residue serine 335 is modified to Phosphoserine. In terms of domain architecture, RRM 3 spans 401–480 (HFVHMRGLPF…LFLNSCPKGK (80 aa)).

Monomer. Found in a complex with DDX28, DHX30, FASTKD2 and FASTKD5. Interacts with the mitochondrial RNase P complex subunit TRMT10C/MRPP1. Interacts with the 2 components of the mitochondrial degradosome complex, PNPT1 and SUPV3L1, in an RNA-dependent manner.

The protein resides in the mitochondrion matrix. The protein localises to the cytoplasm. In terms of biological role, regulator of post-transcriptional mitochondrial gene expression, required for assembly of the mitochondrial ribosome and for recruitment of mRNA and lncRNA. Binds RNAs containing the 14 base G-rich element. Preferentially binds RNAs transcribed from three contiguous genes on the light strand of mtDNA, the ND6 mRNA, and the long non-coding RNAs for MT-CYB and MT-ND5, each of which contains multiple consensus binding sequences. Involved in the degradosome-mediated decay of non-coding mitochondrial transcripts (MT-ncRNA) and tRNA-like molecules. Acts by unwinding G-quadruplex RNA structures in MT-ncRNA, thus facilitating their degradation by the degradosome. G-quadruplexes (G4) are non-canonical 4 stranded structures formed by transcripts from the light strand of mtDNA. The chain is G-rich sequence factor 1 (GRSF1) from Homo sapiens (Human).